A 499-amino-acid polypeptide reads, in one-letter code: Glutamyl-tRNA(Gln) amidotransferase subunit A (499 aa).

Catalysis depends on charge relay system residues K79 and S159. The active-site Acyl-ester intermediate is the S183.

It belongs to the amidase family. GatA subfamily. As to quaternary structure, heterotrimer of A, B and C subunits.

The enzyme catalyses L-glutamyl-tRNA(Gln) + L-glutamine + ATP + H2O = L-glutaminyl-tRNA(Gln) + L-glutamate + ADP + phosphate + H(+). Functionally, allows the formation of correctly charged Gln-tRNA(Gln) through the transamidation of misacylated Glu-tRNA(Gln) in organisms which lack glutaminyl-tRNA synthetase. The reaction takes place in the presence of glutamine and ATP through an activated gamma-phospho-Glu-tRNA(Gln). This is Glutamyl-tRNA(Gln) amidotransferase subunit A from Granulibacter bethesdensis (strain ATCC BAA-1260 / CGDNIH1).